A 214-amino-acid polypeptide reads, in one-letter code: GTP-binding protein ypt3 (214 aa).

17–24 (GDSGVGKS) lines the GTP pocket. An Effector region motif is present at residues 39–47 (SKSTIGVEF). Thr42 bears the Phosphothreonine mark. GTP contacts are provided by residues 65–69 (DTAGQ) and 123–126 (NKTD). S-geranylgeranyl cysteine attachment occurs at residues Cys213 and Cys214.

The protein belongs to the small GTPase superfamily. Rab family.

It is found in the cell membrane. Its subcellular location is the endosome membrane. It localises to the golgi apparatus membrane. The protein localises to the cytoplasm. The protein resides in the nucleus. Its function is as follows. Has a role in retrograde traffricking of proteins from the endosome to the Golgi. Involved in the secretory pathway where it has a role in acid phosphatase secretion. The chain is GTP-binding protein ypt3 (ypt3) from Schizosaccharomyces pombe (strain 972 / ATCC 24843) (Fission yeast).